The sequence spans 537 residues: CTP synthase (537 aa).

Residues 1–268 are amidoligase domain; the sequence is MSTKYIFVTG…DQIVCDHLKL (268 aa). Serine 14 lines the CTP pocket. Serine 14 contributes to the UTP binding site. 15–20 lines the ATP pocket; the sequence is SIGKGI. Tyrosine 55 is a binding site for L-glutamine. Aspartate 72 contacts ATP. Residues aspartate 72 and glutamate 142 each contribute to the Mg(2+) site. CTP is bound by residues 149 to 151, 189 to 194, and lysine 225; these read DIE and KTKPTQ. UTP is bound by residues 189 to 194 and lysine 225; that span reads KTKPTQ. The Glutamine amidotransferase type-1 domain maps to 293-536; it reads RIALVGKYVE…VTAAVEKSSD (244 aa). Glycine 355 contacts L-glutamine. Cysteine 382 acts as the Nucleophile; for glutamine hydrolysis in catalysis. L-glutamine contacts are provided by residues 383–386, glutamate 406, and arginine 464; that span reads LGMQ. Residues histidine 509 and glutamate 511 contribute to the active site.

Belongs to the CTP synthase family. Homotetramer.

The catalysed reaction is UTP + L-glutamine + ATP + H2O = CTP + L-glutamate + ADP + phosphate + 2 H(+). It carries out the reaction L-glutamine + H2O = L-glutamate + NH4(+). The enzyme catalyses UTP + NH4(+) + ATP = CTP + ADP + phosphate + 2 H(+). It functions in the pathway pyrimidine metabolism; CTP biosynthesis via de novo pathway; CTP from UDP: step 2/2. Its activity is regulated as follows. Allosterically activated by GTP, when glutamine is the substrate; GTP has no effect on the reaction when ammonia is the substrate. The allosteric effector GTP functions by stabilizing the protein conformation that binds the tetrahedral intermediate(s) formed during glutamine hydrolysis. Inhibited by the product CTP, via allosteric rather than competitive inhibition. Functionally, catalyzes the ATP-dependent amination of UTP to CTP with either L-glutamine or ammonia as the source of nitrogen. Regulates intracellular CTP levels through interactions with the four ribonucleotide triphosphates. The chain is CTP synthase from Streptococcus sanguinis (strain SK36).